The primary structure comprises 281 residues: Trypsin zeta (281 aa).

A signal peptide spans 1-23; that stretch reads MSSSSWLGCLLAVLLSALALSQG. Residues 24–39 constitute a propeptide, activation peptide; that stretch reads LPLLEDLDENSFPDGR. A Peptidase S1 domain is found at 40–279; it reads IVGGYVTDIA…LRPWIDAVRA (240 aa). Cys-73 and Cys-89 are disulfide-bonded. Catalysis depends on charge relay system residues His-88 and Asp-135. Disulfide bonds link Cys-199-Cys-219 and Cys-231-Cys-255. Ser-235 acts as the Charge relay system in catalysis.

The protein belongs to the peptidase S1 family.

The protein resides in the secreted. Its subcellular location is the extracellular space. It carries out the reaction Preferential cleavage: Arg-|-Xaa, Lys-|-Xaa.. The chain is Trypsin zeta (zetaTry) from Drosophila erecta (Fruit fly).